Consider the following 259-residue polypeptide: Thiazole synthase (259 aa).

Lysine 99 functions as the Schiff-base intermediate with DXP in the catalytic mechanism. Residues glycine 160, 186–187 (AG), and 208–209 (NT) each bind 1-deoxy-D-xylulose 5-phosphate.

Belongs to the ThiG family. As to quaternary structure, homotetramer. Forms heterodimers with either ThiH or ThiS.

The protein resides in the cytoplasm. The enzyme catalyses [ThiS sulfur-carrier protein]-C-terminal-Gly-aminoethanethioate + 2-iminoacetate + 1-deoxy-D-xylulose 5-phosphate = [ThiS sulfur-carrier protein]-C-terminal Gly-Gly + 2-[(2R,5Z)-2-carboxy-4-methylthiazol-5(2H)-ylidene]ethyl phosphate + 2 H2O + H(+). It participates in cofactor biosynthesis; thiamine diphosphate biosynthesis. Catalyzes the rearrangement of 1-deoxy-D-xylulose 5-phosphate (DXP) to produce the thiazole phosphate moiety of thiamine. Sulfur is provided by the thiocarboxylate moiety of the carrier protein ThiS. In vitro, sulfur can be provided by H(2)S. The protein is Thiazole synthase of Porphyromonas gingivalis (strain ATCC BAA-308 / W83).